The chain runs to 297 residues: Probable endonuclease 4 (297 aa).

Positions 69, 110, 145, 179, 182, 214, 227, 229, and 259 each coordinate Zn(2+).

Belongs to the AP endonuclease 2 family. The cofactor is Zn(2+).

It carries out the reaction Endonucleolytic cleavage to 5'-phosphooligonucleotide end-products.. Functionally, endonuclease IV plays a role in DNA repair. It cleaves phosphodiester bonds at apurinic or apyrimidinic (AP) sites, generating a 3'-hydroxyl group and a 5'-terminal sugar phosphate. The protein is Probable endonuclease 4 of Oceanobacillus iheyensis (strain DSM 14371 / CIP 107618 / JCM 11309 / KCTC 3954 / HTE831).